The following is a 253-amino-acid chain: Phosphoglycerate mutase 2 (253 aa).

Thr-3 carries the phosphothreonine modification. Substrate is bound by residues 10–17 (RHGESTWN), 23–24 (CG), Arg-62, 89–92 (ERHY), Lys-100, and 116–117 (RR). The active-site Tele-phosphohistidine intermediate is His-11. Ser-14 is modified (phosphoserine). Glu-89 (proton donor/acceptor) is an active-site residue. Residue Ser-118 is modified to Phosphoserine. Phosphotyrosine is present on residues Tyr-132 and Tyr-133. Phosphoserine is present on Ser-135. The residue at position 152 (Thr-152) is a Phosphothreonine. 187-188 (GN) contacts substrate.

Belongs to the phosphoglycerate mutase family. BPG-dependent PGAM subfamily. As to quaternary structure, homodimer.

The enzyme catalyses (2R)-2-phosphoglycerate = (2R)-3-phosphoglycerate. It carries out the reaction (2R)-3-phospho-glyceroyl phosphate = (2R)-2,3-bisphosphoglycerate + H(+). Its function is as follows. Interconversion of 3- and 2-phosphoglycerate with 2,3-bisphosphoglycerate as the primer of the reaction. Can also catalyze the reaction of EC 5.4.2.4 (synthase), but with a reduced activity. This is Phosphoglycerate mutase 2 (PGAM2) from Bos taurus (Bovine).